We begin with the raw amino-acid sequence, 393 residues long: Riboflavin biosynthesis protein RibBA (393 aa).

Positions 1-200 are DHBP synthase; the sequence is MQFDTIELAI…IKSLVAFRKA (200 aa). D-ribulose 5-phosphate is bound by residues 27–28, D32, 139–143, and E163; these read RE and RNGHT. E28 contributes to the Mg(2+) binding site. Residue H142 participates in Mg(2+) binding. The tract at residues 201 to 393 is GTP cyclohydrolase II; sequence VELNVNLKAK…TKKNKMGHLI (193 aa). A GTP-binding site is contributed by 249 to 253; sequence RMHSA. Residues C254, C265, and C267 each coordinate Zn(2+). GTP is bound by residues Q270, 291-293, and T313; that span reads EGR. The active-site Proton acceptor; for GTP cyclohydrolase activity is D325. Catalysis depends on R327, which acts as the Nucleophile; for GTP cyclohydrolase activity. Residues S348 and K353 each contribute to the GTP site.

In the N-terminal section; belongs to the DHBP synthase family. The protein in the C-terminal section; belongs to the GTP cyclohydrolase II family. Mg(2+) serves as cofactor. The cofactor is Mn(2+). It depends on Zn(2+) as a cofactor.

The catalysed reaction is D-ribulose 5-phosphate = (2S)-2-hydroxy-3-oxobutyl phosphate + formate + H(+). The enzyme catalyses GTP + 4 H2O = 2,5-diamino-6-hydroxy-4-(5-phosphoribosylamino)-pyrimidine + formate + 2 phosphate + 3 H(+). The protein operates within cofactor biosynthesis; riboflavin biosynthesis; 2-hydroxy-3-oxobutyl phosphate from D-ribulose 5-phosphate: step 1/1. Its pathway is cofactor biosynthesis; riboflavin biosynthesis; 5-amino-6-(D-ribitylamino)uracil from GTP: step 1/4. In terms of biological role, catalyzes the conversion of D-ribulose 5-phosphate to formate and 3,4-dihydroxy-2-butanone 4-phosphate. Its function is as follows. Catalyzes the conversion of GTP to 2,5-diamino-6-ribosylamino-4(3H)-pyrimidinone 5'-phosphate (DARP), formate and pyrophosphate. The polypeptide is Riboflavin biosynthesis protein RibBA (Staphylococcus epidermidis (strain ATCC 12228 / FDA PCI 1200)).